Consider the following 172-residue polypeptide: Protein-export protein SecB (172 aa).

Belongs to the SecB family. As to quaternary structure, homotetramer, a dimer of dimers. One homotetramer interacts with 1 SecA dimer.

Its subcellular location is the cytoplasm. In terms of biological role, one of the proteins required for the normal export of preproteins out of the cell cytoplasm. It is a molecular chaperone that binds to a subset of precursor proteins, maintaining them in a translocation-competent state. It also specifically binds to its receptor SecA. In Stenotrophomonas maltophilia (strain K279a), this protein is Protein-export protein SecB.